The following is a 178-amino-acid chain: Transcription factor E (178 aa).

The HTH TFE/IIEalpha-type domain maps to 4 to 88 (AEDLFINLAK…YWKPNIDQIN (85 aa)).

Belongs to the TFE family. In terms of assembly, monomer. Interaction with RNA polymerase subunits RpoF and RpoE is necessary for Tfe stimulatory transcription activity. Able to interact with Tbp and RNA polymerase in the absence of DNA promoter. Interacts both with the preinitiation and elongation complexes.

Transcription factor that plays a role in the activation of archaeal genes transcribed by RNA polymerase. Facilitates transcription initiation by enhancing TATA-box recognition by TATA-box-binding protein (Tbp), and transcription factor B (Tfb) and RNA polymerase recruitment. Not absolutely required for transcription in vitro, but particularly important in cases where Tbp or Tfb function is not optimal. It dynamically alters the nucleic acid-binding properties of RNA polymerases by stabilizing the initiation complex and destabilizing elongation complexes. Seems to translocate with the RNA polymerase following initiation and acts by binding to the non template strand of the transcription bubble in elongation complexes. The sequence is that of Transcription factor E from Saccharolobus islandicus (strain L.S.2.15 / Lassen #1) (Sulfolobus islandicus).